The following is a 330-amino-acid chain: Growth hormone-regulated TBC protein 6 (330 aa).

The 179-residue stretch at 78 to 256 folds into the Rab-GAP TBC domain; the sequence is GIPHTFRKEL…RLWDCLIYEG (179 aa).

This chain is Growth hormone-regulated TBC protein 6 (tbc-6), found in Caenorhabditis elegans.